The primary structure comprises 362 residues: Phosphoserine aminotransferase (362 aa).

S9 and R42 together coordinate L-glutamate. Pyridoxal 5'-phosphate contacts are provided by residues 76 to 77 (GR), W102, T153, D174, and Q197. K198 bears the N6-(pyridoxal phosphate)lysine mark. 239-240 (NT) is a binding site for pyridoxal 5'-phosphate.

The protein belongs to the class-V pyridoxal-phosphate-dependent aminotransferase family. SerC subfamily. In terms of assembly, homodimer. The cofactor is pyridoxal 5'-phosphate.

It localises to the cytoplasm. The enzyme catalyses O-phospho-L-serine + 2-oxoglutarate = 3-phosphooxypyruvate + L-glutamate. It carries out the reaction 4-(phosphooxy)-L-threonine + 2-oxoglutarate = (R)-3-hydroxy-2-oxo-4-phosphooxybutanoate + L-glutamate. Its pathway is amino-acid biosynthesis; L-serine biosynthesis; L-serine from 3-phospho-D-glycerate: step 2/3. It participates in cofactor biosynthesis; pyridoxine 5'-phosphate biosynthesis; pyridoxine 5'-phosphate from D-erythrose 4-phosphate: step 3/5. In terms of biological role, catalyzes the reversible conversion of 3-phosphohydroxypyruvate to phosphoserine and of 3-hydroxy-2-oxo-4-phosphonooxybutanoate to phosphohydroxythreonine. The chain is Phosphoserine aminotransferase from Escherichia coli O157:H7.